Reading from the N-terminus, the 517-residue chain is zeta-carotene-forming phytoene desaturase (517 aa).

V11–G44 serves as a coordination point for FAD.

Belongs to the carotenoid/retinoid oxidoreductase family. The cofactor is FAD.

It carries out the reaction 15-cis-phytoene + 2 A = all-trans-zeta-carotene + 2 AH2. Its pathway is carotenoid biosynthesis; lycopene biosynthesis. Its function is as follows. Dehydrogenates carotenes in the cis conformation: has cis-to-trans isomerase activity and mediates dehydrogenation of cis-phytoene, producing zeta-carotene via the intermediary of phytofluene by the symmetrical introduction of 2 double bonds at the C-11 and C-11' positions of phytoene. The polypeptide is zeta-carotene-forming phytoene desaturase (carA2) (Myxococcus xanthus).